A 264-amino-acid chain; its full sequence is Thymidylate synthase 2 (264 aa).

Arginine 21 contributes to the dUMP binding site. Histidine 51 contributes to the (6R)-5,10-methylene-5,6,7,8-tetrahydrofolate binding site. 126-127 (RR) contacts dUMP. The Nucleophile role is filled by cysteine 146. DUMP is bound by residues 166 to 169 (RSAD), asparagine 177, and 207 to 209 (HIY). Aspartate 169 contacts (6R)-5,10-methylene-5,6,7,8-tetrahydrofolate. Serine 263 lines the (6R)-5,10-methylene-5,6,7,8-tetrahydrofolate pocket.

This sequence belongs to the thymidylate synthase family. Bacterial-type ThyA subfamily. Homodimer.

The protein resides in the cytoplasm. The catalysed reaction is dUMP + (6R)-5,10-methylene-5,6,7,8-tetrahydrofolate = 7,8-dihydrofolate + dTMP. The protein operates within pyrimidine metabolism; dTTP biosynthesis. In terms of biological role, catalyzes the reductive methylation of 2'-deoxyuridine-5'-monophosphate (dUMP) to 2'-deoxythymidine-5'-monophosphate (dTMP) while utilizing 5,10-methylenetetrahydrofolate (mTHF) as the methyl donor and reductant in the reaction, yielding dihydrofolate (DHF) as a by-product. This enzymatic reaction provides an intracellular de novo source of dTMP, an essential precursor for DNA biosynthesis. The sequence is that of Thymidylate synthase 2 from Bacillus spizizenii (strain ATCC 23059 / NRRL B-14472 / W23) (Bacillus subtilis subsp. spizizenii).